The primary structure comprises 362 residues: Phosphoserine aminotransferase (362 aa).

L-glutamate-binding residues include Ser-9 and Arg-42. Pyridoxal 5'-phosphate-binding positions include 76–77 (GR), Trp-102, Thr-153, Asp-174, and Gln-197. At Lys-198 the chain carries N6-(pyridoxal phosphate)lysine. Residue 239 to 240 (NT) participates in pyridoxal 5'-phosphate binding.

This sequence belongs to the class-V pyridoxal-phosphate-dependent aminotransferase family. SerC subfamily. Homodimer. Pyridoxal 5'-phosphate serves as cofactor.

The protein resides in the cytoplasm. The enzyme catalyses O-phospho-L-serine + 2-oxoglutarate = 3-phosphooxypyruvate + L-glutamate. It catalyses the reaction 4-(phosphooxy)-L-threonine + 2-oxoglutarate = (R)-3-hydroxy-2-oxo-4-phosphooxybutanoate + L-glutamate. Its pathway is amino-acid biosynthesis; L-serine biosynthesis; L-serine from 3-phospho-D-glycerate: step 2/3. It participates in cofactor biosynthesis; pyridoxine 5'-phosphate biosynthesis; pyridoxine 5'-phosphate from D-erythrose 4-phosphate: step 3/5. Catalyzes the reversible conversion of 3-phosphohydroxypyruvate to phosphoserine and of 3-hydroxy-2-oxo-4-phosphonooxybutanoate to phosphohydroxythreonine. The polypeptide is Phosphoserine aminotransferase (Salmonella arizonae (strain ATCC BAA-731 / CDC346-86 / RSK2980)).